The sequence spans 327 residues: L-serine dehydratase/L-threonine deaminase (327 aa).

Ala2 carries the post-translational modification N-acetylalanine. Lys41 is subject to N6-(pyridoxal phosphate)lysine. Pyridoxal 5'-phosphate is bound at residue Pro128.

Belongs to the serine/threonine dehydratase family. In terms of assembly, homodimer. Pyridoxal 5'-phosphate is required as a cofactor.

The protein localises to the cytoplasm. It catalyses the reaction L-serine = pyruvate + NH4(+). It carries out the reaction L-threonine = 2-oxobutanoate + NH4(+). It functions in the pathway carbohydrate biosynthesis; gluconeogenesis. Catalyzes the pyridoxal-phosphate-dependent dehydrative deamination of L-threonine and L-serine to ammonia and alpha-ketobutyrate and pyruvate, respectively. In Mus musculus (Mouse), this protein is L-serine dehydratase/L-threonine deaminase (Sds).